The primary structure comprises 340 residues: tRNA N6-adenosine threonylcarbamoyltransferase (340 aa).

2 residues coordinate Fe cation: His-111 and His-115. Residues 133-137 (VVSGG), Asp-166, Gly-179, Asp-183, and Asn-273 each bind substrate. Asp-301 is a Fe cation binding site.

It belongs to the KAE1 / TsaD family. The cofactor is Fe(2+).

It is found in the cytoplasm. It carries out the reaction L-threonylcarbamoyladenylate + adenosine(37) in tRNA = N(6)-L-threonylcarbamoyladenosine(37) in tRNA + AMP + H(+). Required for the formation of a threonylcarbamoyl group on adenosine at position 37 (t(6)A37) in tRNAs that read codons beginning with adenine. Is involved in the transfer of the threonylcarbamoyl moiety of threonylcarbamoyl-AMP (TC-AMP) to the N6 group of A37, together with TsaE and TsaB. TsaD likely plays a direct catalytic role in this reaction. The sequence is that of tRNA N6-adenosine threonylcarbamoyltransferase from Pelobacter propionicus (strain DSM 2379 / NBRC 103807 / OttBd1).